A 161-amino-acid chain; its full sequence is Protein-export protein SecB (161 aa).

It belongs to the SecB family. As to quaternary structure, homotetramer, a dimer of dimers. One homotetramer interacts with 1 SecA dimer.

The protein resides in the cytoplasm. Functionally, one of the proteins required for the normal export of preproteins out of the cell cytoplasm. It is a molecular chaperone that binds to a subset of precursor proteins, maintaining them in a translocation-competent state. It also specifically binds to its receptor SecA. The chain is Protein-export protein SecB from Coxiella burnetii (strain CbuG_Q212) (Coxiella burnetii (strain Q212)).